The following is a 94-amino-acid chain: Integration host factor subunit beta (94 aa).

Belongs to the bacterial histone-like protein family. As to quaternary structure, heterodimer of an alpha and a beta chain.

Its function is as follows. This protein is one of the two subunits of integration host factor, a specific DNA-binding protein that functions in genetic recombination as well as in transcriptional and translational control. This chain is Integration host factor subunit beta (ihfB), found in Dickeya dadantii (strain 3937) (Erwinia chrysanthemi (strain 3937)).